Consider the following 30-residue polypeptide: Snaclec carinactivase-1 regulatory subunit 17 kDa chain (30 aa).

Residues 1 to 30 (DCLPGWSSHEGHCYKVFNQEMYWADAEKFC) enclose the C-type lectin domain. A disulfide bond links Cys2 and Cys13.

The protein belongs to the snaclec family. Heterodimer of a metalloproteinase subunit and a regulatory subunit comprising two polypeptides disulfide-linked (14 kDa and 17 kDa chains). Expressed by the venom gland.

It is found in the secreted. Calcium-dependent prothrombin activator. This protein may activate prothrombin via recognition by the regulatory subunit of the calcium ion bound conformation of its gamma-carboxyglutamic acid (GLA) domain, and the subsequent conversion of prothrombin to active thrombin is catalyzed by the catalytic subunit. The protein is Snaclec carinactivase-1 regulatory subunit 17 kDa chain of Echis carinatus (Saw-scaled viper).